Consider the following 86-residue polypeptide: Neurotoxin-like protein NTL2 (86 aa).

The N-terminal stretch at 1-21 is a signal peptide; sequence MKTLLLSLVVVTIVCLDLGYT. 4 disulfides stabilise this stretch: Cys-24–Cys-45, Cys-38–Cys-63, Cys-67–Cys-78, and Cys-79–Cys-84.

It belongs to the three-finger toxin family. Short-chain subfamily. Orphan group I sub-subfamily. Expressed by the venom gland.

Its subcellular location is the secreted. This chain is Neurotoxin-like protein NTL2, found in Naja atra (Chinese cobra).